A 234-amino-acid chain; its full sequence is STARD3 N-terminal-like protein (234 aa).

Met-1 is modified (N-acetylmethionine). The Cytoplasmic portion of the chain corresponds to 1-53 (MNHLPEDMENALTGSQSSHASLRNIHSINPTQLMARIESYEGREKKGISDVRR). 3 positions are modified to phosphoserine: Ser-15, Ser-21, and Ser-27. Residues 48–218 (ISDVRRTFCL…YSPPESEAGS (171 aa)) enclose the MENTAL domain. Residues 54-74 (TFCLFVTFDLLFVTLLWIIEL) traverse the membrane as a helical segment. Residues 75-97 (NVNGGIENTLEKEVMQYDYYSSY) are Extracellular-facing. A helical membrane pass occupies residues 98-118 (FDIFLLAVFRFKVLILAYAVC). Over 119 to 122 (RLRH) the chain is Cytoplasmic. A helical transmembrane segment spans residues 123–143 (WWAIALTTAVTSAFLLAKVIL). The Extracellular portion of the chain corresponds to 144–150 (SKLFSQG). A helical transmembrane segment spans residues 151–171 (AFGYVLPIISFILAWIETWFL). Topologically, residues 172–234 (DFKVLPQEAE…QDSEKPLLEL (63 aa)) are cytoplasmic. Phosphoserine is present on Ser-193. The tract at residues 200–234 (PGGLSDGQFYSPPESEAGSEEAEEKQDSEKPLLEL) is disordered. Positions 208–213 (FYSPPE) match the FFAT motif. Over residues 224–234 (KQDSEKPLLEL) the composition is skewed to basic and acidic residues.

It belongs to the STARD3 family. As to quaternary structure, homodimer. Interacts (via the MENTAL domain) with STARD3NL. Interacts (via FFAT motif) with VAPA. Interacts (via FFAT motif) with VAPB. Interacts (via FFAT motif) with MOSPD2 (via MSP domain).

Its subcellular location is the late endosome membrane. Its function is as follows. Tethering protein that creates contact site between the endoplasmic reticulum and late endosomes: localizes to late endosome membranes and contacts the endoplasmic reticulum via interaction with VAPA and VAPB. The polypeptide is STARD3 N-terminal-like protein (Homo sapiens (Human)).